Reading from the N-terminus, the 788-residue chain is Patatin-like phospholipase domain-containing protein DEHA2B04136g (788 aa).

A helical membrane pass occupies residues 136-156 (WPILIFISCWISLLCFMYIIV). The 193-residue stretch at 311–503 (LCLSGGACFT…RTDIPIDALN (193 aa)) folds into the PNPLA domain. Residues 342–346 (GTSGG) carry the GXSXG motif. The active-site Nucleophile is the S344. Residue D490 is the Proton acceptor of the active site. The span at 662–672 (ANFNTLTSSDS) shows a compositional bias: polar residues. The tract at residues 662-771 (ANFNTLTSSD…DTGSRFLKSF (110 aa)) is disordered. Composition is skewed to acidic residues over residues 690 to 705 (MFDD…DDEV) and 723 to 749 (EDGD…DEAN).

The protein belongs to the PLPL family.

Its subcellular location is the membrane. Functionally, probable lipid hydrolase. The protein is Patatin-like phospholipase domain-containing protein DEHA2B04136g of Debaryomyces hansenii (strain ATCC 36239 / CBS 767 / BCRC 21394 / JCM 1990 / NBRC 0083 / IGC 2968) (Yeast).